The following is a 189-amino-acid chain: Large ribosomal subunit protein bL9 (189 aa).

Belongs to the bacterial ribosomal protein bL9 family.

In terms of biological role, binds to the 23S rRNA. The polypeptide is Large ribosomal subunit protein bL9 (Beijerinckia indica subsp. indica (strain ATCC 9039 / DSM 1715 / NCIMB 8712)).